A 509-amino-acid chain; its full sequence is Histidine--tRNA ligase, cytoplasmic (509 aa).

Alanine 2 carries the post-translational modification N-acetylalanine. The 57-residue stretch at 3–59 (ERAALEELVKLQGERVRGLKQQKASAELIEEEVAKLLKLKAQLGPDESKQKFVLKTP) folds into the WHEP-TRS domain. Serine 66 carries the post-translational modification Phosphoserine. L-histidine is bound by residues 130-132 (DLT), arginine 157, glutamine 173, aspartate 177, arginine 326, and 330-331 (YY). The residue at position 356 (serine 356) is a Phosphoserine.

The protein belongs to the class-II aminoacyl-tRNA synthetase family. As to quaternary structure, homodimer. In terms of tissue distribution, brain, heart, liver and kidney.

Its subcellular location is the cytoplasm. The catalysed reaction is tRNA(His) + L-histidine + ATP = L-histidyl-tRNA(His) + AMP + diphosphate + H(+). Catalyzes the ATP-dependent ligation of histidine to the 3'-end of its cognate tRNA, via the formation of an aminoacyl-adenylate intermediate (His-AMP). Plays a role in axon guidance. This is Histidine--tRNA ligase, cytoplasmic from Homo sapiens (Human).